The chain runs to 330 residues: Sulfate/thiosulfate import ATP-binding protein CysA (330 aa).

Residues 3–237 (IEIRNINKQF…PASEFVYHFL (235 aa)) enclose the ABC transporter domain. Residue 35–42 (GPSGCGKT) participates in ATP binding.

Belongs to the ABC transporter superfamily. Sulfate/tungstate importer (TC 3.A.1.6) family. As to quaternary structure, the complex is composed of two ATP-binding proteins (CysA), two transmembrane proteins (CysT and CysW) and a solute-binding protein (CysP).

The protein resides in the cell inner membrane. It catalyses the reaction sulfate(out) + ATP + H2O = sulfate(in) + ADP + phosphate + H(+). It carries out the reaction thiosulfate(out) + ATP + H2O = thiosulfate(in) + ADP + phosphate + H(+). Part of the ABC transporter complex CysAWTP involved in sulfate/thiosulfate import. Responsible for energy coupling to the transport system. The polypeptide is Sulfate/thiosulfate import ATP-binding protein CysA (Pectobacterium atrosepticum (strain SCRI 1043 / ATCC BAA-672) (Erwinia carotovora subsp. atroseptica)).